A 249-amino-acid polypeptide reads, in one-letter code: Ribonuclease HII (249 aa).

The region spanning 30 to 221 (GPVAGVDEVG…VRRLVMDGEP (192 aa)) is the RNase H type-2 domain. Positions 36, 37, and 130 each coordinate a divalent metal cation.

The protein belongs to the RNase HII family. Mn(2+) serves as cofactor. The cofactor is Mg(2+).

The protein localises to the cytoplasm. The enzyme catalyses Endonucleolytic cleavage to 5'-phosphomonoester.. Its function is as follows. Endonuclease that specifically degrades the RNA of RNA-DNA hybrids. The protein is Ribonuclease HII of Mycolicibacterium vanbaalenii (strain DSM 7251 / JCM 13017 / BCRC 16820 / KCTC 9966 / NRRL B-24157 / PYR-1) (Mycobacterium vanbaalenii).